Consider the following 220-residue polypeptide: Adenylate kinase (220 aa).

10–15 (GAGKGT) lines the ATP pocket. Positions 30–59 (STGDMLRAAVKAGTPLGVEAKGYMDAGKLV) are NMP. Residues Thr31, Arg36, 57 to 59 (KLV), 85 to 88 (GFPR), and Gln92 each bind AMP. The tract at residues 122-159 (GRRTHPASGRTYHVKFNPPKVEGHDDVTGEPLIQRDDD) is LID. Residues Arg123 and 132–133 (TY) contribute to the ATP site. Arg156 and Arg167 together coordinate AMP. Gly206 lines the ATP pocket.

It belongs to the adenylate kinase family. Monomer.

It is found in the cytoplasm. The catalysed reaction is AMP + ATP = 2 ADP. It participates in purine metabolism; AMP biosynthesis via salvage pathway; AMP from ADP: step 1/1. Catalyzes the reversible transfer of the terminal phosphate group between ATP and AMP. Plays an important role in cellular energy homeostasis and in adenine nucleotide metabolism. This is Adenylate kinase from Burkholderia cenocepacia (strain HI2424).